The sequence spans 648 residues: Nucleoside triphosphatase I (648 aa).

Positions 48–213 (FIGLKNLNSM…NNLIGLLRPN (166 aa)) constitute a Helicase ATP-binding domain. 61–68 (WDTGTGKT) provides a ligand contact to ATP. Positions 151-154 (DEVH) match the DEXH box motif. Residues 379–542 (YIEACRIILN…KINVVFDLLK (164 aa)) form the Helicase C-terminal domain. Positions 468-534 (DIIILDMPWN…DIIKNKQGKI (67 aa)) are binding to the cap-specific mRNA (nucleoside-2'-O-)-methyltransferase.

It belongs to the helicase family. NPH I subfamily. As to quaternary structure, monomer. Interacts (via C-terminus) with RAP94 (via N-terminus). Interacts with the cap-specific mRNA (nucleoside-2'-O-)-methyltransferase.

It is found in the virion. It carries out the reaction a ribonucleoside 5'-triphosphate + H2O = a ribonucleoside 5'-diphosphate + phosphate + H(+). Functionally, DNA-dependent ATPase required for providing the needed energy to achieve the termination of early transcripts. Acts in concert with the RAP94 subunit of the virion RNA polymerase and the capping enzyme/VTF to catalyze release of UUUUUNU-containing nascent RNA from the elongation complex. NPH-I must bind ssDNA in order to exhibit ATPase activity. The polypeptide is Nucleoside triphosphatase I (NPH1) (Choristoneura fumiferana (Spruce budworm moth)).